The primary structure comprises 123 residues: Small ribosomal subunit protein uS12cz/uS12cy (123 aa).

This sequence belongs to the universal ribosomal protein uS12 family. Part of the 30S ribosomal subunit.

Its subcellular location is the plastid. The protein resides in the chloroplast. Functionally, with S4 and S5 plays an important role in translational accuracy. Located at the interface of the 30S and 50S subunits. This chain is Small ribosomal subunit protein uS12cz/uS12cy (rps12-A), found in Gossypium barbadense (Sea Island cotton).